The following is a 354-amino-acid chain: Selenide, water dikinase (354 aa).

Residue Cys23 is part of the active site. Residues Lys26 and 54-56 contribute to the ATP site; that span reads TSD. Asp57 serves as a coordination point for Mg(2+). Residues Asp74, Asp97, and 145 to 147 contribute to the ATP site; that span reads GHS. Residue Asp97 participates in Mg(2+) binding. Asp233 lines the Mg(2+) pocket.

It belongs to the selenophosphate synthase 1 family. Class I subfamily. Homodimer. Mg(2+) is required as a cofactor.

The enzyme catalyses hydrogenselenide + ATP + H2O = selenophosphate + AMP + phosphate + 2 H(+). Its function is as follows. Synthesizes selenophosphate from selenide and ATP. The chain is Selenide, water dikinase from Burkholderia ambifaria (strain MC40-6).